Reading from the N-terminus, the 160-residue chain is Protein-export protein SecB (160 aa).

This sequence belongs to the SecB family. Homotetramer, a dimer of dimers. One homotetramer interacts with 1 SecA dimer.

The protein resides in the cytoplasm. Functionally, one of the proteins required for the normal export of preproteins out of the cell cytoplasm. It is a molecular chaperone that binds to a subset of precursor proteins, maintaining them in a translocation-competent state. It also specifically binds to its receptor SecA. In Aliivibrio salmonicida (strain LFI1238) (Vibrio salmonicida (strain LFI1238)), this protein is Protein-export protein SecB.